Reading from the N-terminus, the 89-residue chain is MSLSATQKQEVITSYQVHETDTGSADLQVALLTTRISQLTGHLQQNPKDHASRRGLLKMIGRRRRLLSYINSKDSQRYQDLIKRLGIRR.

It belongs to the universal ribosomal protein uS15 family. As to quaternary structure, part of the 30S ribosomal subunit. Forms a bridge to the 50S subunit in the 70S ribosome, contacting the 23S rRNA.

Its function is as follows. One of the primary rRNA binding proteins, it binds directly to 16S rRNA where it helps nucleate assembly of the platform of the 30S subunit by binding and bridging several RNA helices of the 16S rRNA. In terms of biological role, forms an intersubunit bridge (bridge B4) with the 23S rRNA of the 50S subunit in the ribosome. The polypeptide is Small ribosomal subunit protein uS15 (Rippkaea orientalis (strain PCC 8801 / RF-1) (Cyanothece sp. (strain PCC 8801))).